Reading from the N-terminus, the 199-residue chain is Single-stranded DNA cytosine deaminase (199 aa).

Positions 1–30 (MDSLLKKQRQFLYQFKNVRWAKGRHETYLC) match the Bipartite nuclear localization signal motif. The interval 2-26 (DSLLKKQRQFLYQFKNVRWAKGRHE) is interaction with SUPT6H. A CMP/dCMP-type deaminase domain is found at 23–130 (GRHETYLCYV…KAEPEGLRRL (108 aa)). At Thr27 the chain carries Phosphothreonine; by PKA. Phosphoserine; by PKA is present on Ser38. The tract at residues 39-42 (PTSF) is important for interaction with CTNNBL1. His56 provides a ligand contact to Zn(2+). Catalysis depends on Glu58, which acts as the Proton donor. Residues Cys87 and Cys90 each contribute to the Zn(2+) site. Residues 88 to 116 (YDCARHVADFLRGYPNLSLRIFTARLYFC) form a required for interaction with RNF126 region. Positions 184-199 (LYEVDDLRDAFRTLGL) match the Nuclear export signal motif.

It belongs to the cytidine and deoxycytidylate deaminase family. As to quaternary structure, interacts with CTNNBL1; the interaction is important for the immunoglobulin switch activity of AICDA. Interacts (via its NLS) with KPNA1. Interacts with PKA/PRKACA and PRKAR1A/PKR1. Interacts with SUPT6H, TRIM28 and NCL. Directly interacts with MCM3AP; this interaction may favor AICDA recruitment to immunoglobulin variable region genes, hence promoting somatic hypermutations. The cofactor is Zn(2+). Post-translationally, ser-38 is the major site whereas Thr-27 is the minor site of phosphorylation. Phosphorylation regulates its class-switch recombination activity. In terms of processing, probably monoubiquitinated on several residues by RNF126. In terms of tissue distribution, expressed in lymph nodes, spleen and thymus.

The protein localises to the nucleus. It localises to the cytoplasm. It carries out the reaction a 2'-deoxycytidine in single-stranded DNA + H2O + H(+) = a 2'-deoxyuridine in single-stranded DNA + NH4(+). Its function is as follows. Single-stranded DNA-specific cytidine deaminase. Involved in somatic hypermutation (SHM), gene conversion, and class-switch recombination (CSR) in B-lymphocytes by deaminating C to U during transcription of Ig-variable (V) and Ig-switch (S) region DNA. Required for several crucial steps of B-cell terminal differentiation necessary for efficient antibody responses. May also play a role in the epigenetic regulation of gene expression by participating in DNA demethylation. The polypeptide is Single-stranded DNA cytosine deaminase (AICDA) (Bos taurus (Bovine)).